Consider the following 602-residue polypeptide: Prostaglandin G/H synthase 1 (602 aa).

Positions methionine 1 to leucine 26 are cleaved as a signal peptide. Residues proline 34–threonine 72 form the EGF-like domain. 4 cysteine pairs are disulfide-bonded: cysteine 38–cysteine 49, cysteine 39–cysteine 161, cysteine 43–cysteine 59, and cysteine 61–cysteine 71. N-linked (GlcNAc...) asparagine glycans are attached at residues asparagine 70, asparagine 106, and asparagine 146. Histidine 209 serves as the catalytic Proton acceptor. Catalysis depends on tyrosine 387, which acts as the For cyclooxygenase activity. Heme b is bound at residue histidine 390. N-linked (GlcNAc...) asparagine glycosylation is present at asparagine 412. A disulfide bond links cysteine 571 and cysteine 577.

It belongs to the prostaglandin G/H synthase family. As to quaternary structure, homodimer. Requires heme b as cofactor.

It localises to the microsome membrane. The protein resides in the endoplasmic reticulum membrane. The catalysed reaction is (5Z,8Z,11Z,14Z)-eicosatetraenoate + AH2 + 2 O2 = prostaglandin H2 + A + H2O. It catalyses the reaction (5Z,8Z,11Z,14Z)-eicosatetraenoate + 2 O2 = prostaglandin G2. It carries out the reaction prostaglandin G2 + AH2 = prostaglandin H2 + A + H2O. The enzyme catalyses (9Z,12Z)-octadecadienoate + AH2 + O2 = (9R)-hydroxy-(10E,12Z)-octadecadienoate + A + H2O. The catalysed reaction is (9Z,12Z)-octadecadienoate + AH2 + O2 = (9S)-hydroxy-(10E,12Z)-octadecadienoate + A + H2O. It catalyses the reaction (9Z,12Z)-octadecadienoate + AH2 + O2 = (13S)-hydroxy-(9Z,11E)-octadecadienoate + A + H2O. It carries out the reaction (9Z,12Z)-octadecadienoate + AH2 + O2 = (13R)-hydroxy-(9Z,11E)-octadecadienoate + A + H2O. It functions in the pathway lipid metabolism; prostaglandin biosynthesis. The cyclooxygenase activity is inhibited by nonsteroidal anti-inflammatory drugs (NSAIDs) including ibuprofen, flurbiprofen, ketoprofen, naproxen, flurbiprofen, anirolac, fenclofenac and diclofenac. Its function is as follows. Dual cyclooxygenase and peroxidase that plays an important role in the biosynthesis pathway of prostanoids, a class of C20 oxylipins mainly derived from arachidonate ((5Z,8Z,11Z,14Z)-eicosatetraenoate, AA, C20:4(n-6)), with a particular role in the inflammatory response. The cyclooxygenase activity oxygenates AA to the hydroperoxy endoperoxide prostaglandin G2 (PGG2), and the peroxidase activity reduces PGG2 to the hydroxy endoperoxide prostaglandin H2 (PGH2), the precursor of all 2-series prostaglandins and thromboxanes. This complex transformation is initiated by abstraction of hydrogen at carbon 13 (with S-stereochemistry), followed by insertion of molecular O2 to form the endoperoxide bridge between carbon 9 and 11 that defines prostaglandins. The insertion of a second molecule of O2 (bis-oxygenase activity) yields a hydroperoxy group in PGG2 that is then reduced to PGH2 by two electrons. Involved in the constitutive production of prostanoids in particular in the stomach and platelets. In gastric epithelial cells, it is a key step in the generation of prostaglandins, such as prostaglandin E2 (PGE2), which plays an important role in cytoprotection. In platelets, it is involved in the generation of thromboxane A2 (TXA2), which promotes platelet activation and aggregation, vasoconstriction and proliferation of vascular smooth muscle cells. Can also use linoleate (LA, (9Z,12Z)-octadecadienoate, C18:2(n-6)) as substrate and produce hydroxyoctadecadienoates (HODEs) in a regio- and stereospecific manner, being (9R)-HODE ((9R)-hydroxy-(10E,12Z)-octadecadienoate) and (13S)-HODE ((13S)-hydroxy-(9Z,11E)-octadecadienoate) its major products. This is Prostaglandin G/H synthase 1 from Rattus norvegicus (Rat).